The following is a 118-amino-acid chain: T cell receptor gamma variable 4 (118 aa).

The signal sequence occupies residues 1–17; sequence MQWALAVLLAFLSPASQ. An Ig-like domain is found at 18 to 118; that stretch reads KSSNLEGRTK…GVYYCATWDG (101 aa). The cysteines at positions 41 and 113 are disulfide-linked. N-linked (GlcNAc...) asparagine glycosylation is present at Asn-106.

In terms of assembly, gamma-delta TR is a heterodimer composed of a gamma and delta chain; disulfide-linked. The gamma-delta TR is associated with the transmembrane signaling CD3 coreceptor proteins following the stoichiometry: a single gamma-delta TR heterodimer associates with one CD3D-CD3E heterodimer, one CD3G-CD3E heterodimer and one CD247 homodimer forming a stable octameric structure. Upon activation, gamma-delta TR complex associates with FCER1G to initiate intracellular signaling.

The protein resides in the cell membrane. In terms of biological role, v region of the variable domain of T cell receptor (TR) gamma chain that participates in the antigen recognition. Gamma-delta TRs recognize a variety of self and foreign non-peptide antigens frequently expressed at the epithelial boundaries between the host and external environment, including endogenous lipids presented by MH-like protein CD1D and phosphoantigens presented by butyrophilin-like molecule BTN3A1. Upon antigen recognition induces rapid, innate-like immune responses involved in pathogen clearance and tissue repair. Binding of gamma-delta TR complex to antigen triggers phosphorylation of immunoreceptor tyrosine-based activation motifs (ITAMs) in the CD3 chains by the LCK and FYN kinases, allowing the recruitment, phosphorylation, and activation of ZAP70 that facilitates phosphorylation of the scaffolding proteins LCP2 and LAT. This lead to the formation of a supramolecular signalosome that recruits the phospholipase PLCG1, resulting in calcium mobilization and ERK activation, ultimately leading to T cell expansion and differentiation into effector cells. Gamma-delta TRs are produced through somatic rearrangement of a limited repertoire of variable (V), diversity (D), and joining (J) genes. The potential diversity of gamma-delta TRs is conferred by the unique ability to rearrange (D) genes in tandem and to utilize all three reading frames. The combinatorial diversity is considerably increased by the sequence exonuclease trimming and random nucleotide (N) region additions which occur during the V-(D)-J rearrangements. This Homo sapiens (Human) protein is T cell receptor gamma variable 4.